The following is a 374-amino-acid chain: DNA replication and repair protein RecF (374 aa).

34-41 (GNNGSGKT) contributes to the ATP binding site.

This sequence belongs to the RecF family.

The protein resides in the cytoplasm. In terms of biological role, the RecF protein is involved in DNA metabolism; it is required for DNA replication and normal SOS inducibility. RecF binds preferentially to single-stranded, linear DNA. It also seems to bind ATP. The chain is DNA replication and repair protein RecF from Allorhizobium ampelinum (strain ATCC BAA-846 / DSM 112012 / S4) (Agrobacterium vitis (strain S4)).